Reading from the N-terminus, the 254-residue chain is MYTVITVPAFTDNYIWLIRHENHCLVVDPGDAGPVLDRLAALDLQLDAILLTHHHQDHVGGVTALLKHFPHARLYGPKHDPMPDHHGQWLDDGDQINWHGLSLDVIHVPGHTHGHIAYHGHGMLFCGDTLFSGGCGRLFEGTPAQMHDSLQRLAALPDDTLIYCAHEYTLSNLRFAYAVEPDNKAIQQRIGMISKLRQQGLPSLPSRLGDERDFNVFLRCEQDSVKFSAEKYALKCLENPEDTFAVLRSWKDVF.

Zn(2+) contacts are provided by histidine 53, histidine 55, aspartate 57, histidine 58, histidine 111, aspartate 128, and histidine 166.

It belongs to the metallo-beta-lactamase superfamily. Glyoxalase II family. As to quaternary structure, monomer. The cofactor is Zn(2+).

The catalysed reaction is an S-(2-hydroxyacyl)glutathione + H2O = a 2-hydroxy carboxylate + glutathione + H(+). It participates in secondary metabolite metabolism; methylglyoxal degradation; (R)-lactate from methylglyoxal: step 2/2. Thiolesterase that catalyzes the hydrolysis of S-D-lactoyl-glutathione to form glutathione and D-lactic acid. The sequence is that of Hydroxyacylglutathione hydrolase from Aeromonas salmonicida (strain A449).